A 719-amino-acid polypeptide reads, in one-letter code: Potassium channel KOR2 (719 aa).

At 1-63 the chain is on the cytoplasmic side; that stretch reads MAEEYELNEI…VIHPNGRWYR (63 aa). The chain crosses the membrane as a helical span at residues 64–84; that stretch reads IWANMMFLWSIYSTFFTPFEF. Residues 85–93 lie on the Extracellular side of the membrane; sequence SFFRGLPDQ. A helical transmembrane segment spans residues 94-114; sequence LLDLECVQLVFLADVAVHFFL. Over 115 to 137 the chain is Cytoplasmic; that stretch reads AYRDPHTYRMVHDKRHIALRYIK. The chain crosses the membrane as a helical span at residues 138–158; the sequence is GSFALDVLGCFPWDAIYKVTG. Residues 159 to 164 are Extracellular-facing; it reads RVEAVR. A helical; Voltage-sensor membrane pass occupies residues 165–185; that stretch reads WLVWVRLYRGRKVMAFFKRVE. Over 186-199 the chain is Cytoplasmic; it reads KDIRVSYLLTRIVK. The chain crosses the membrane as a helical span at residues 200–220; sequence LITVELYCTHTAACGFYYLAT. The Extracellular segment spans residues 221–255; sequence TLPPAREGGTWIGSLSLGDARYINFREVDLLTRYV. Positions 256-275 form an intramembrane region, pore-forming; the sequence is TSLYLAIVTMATVGYGDIHA. The Extracellular segment spans residues 276-285; the sequence is VNTREMAFTV. A helical transmembrane segment spans residues 286–306; the sequence is VYISFSIVLSAYLIGNMTALI. Residues 307-719 are Cytoplasmic-facing; it reads VKGSRTERFR…LEQARTVATN (413 aa). 383 to 503 serves as a coordination point for a nucleoside 3',5'-cyclic phosphate; it reads LFRGCSDDFL…SQILSNLLKG (121 aa). 5 ANK repeats span residues 523–556, 560–589, 593–622, 624–653, and 657–686; these read KQESELVLGVNNAAYHGDIFRLKSLISAGADPSK, DGRTALHIAALRGYENIVRFLIQRGANVNS, FGNSPLLQAVKSGHDRITSLLVEHGAILNL, DAGGYLCRVVRGGRIDLLKKLLRFGISPNC, and DQRTPLHIAAAEGLHLVASTLIESGADIQA.

Belongs to the potassium channel family. Plant (TC 1.A.1.4) subfamily.

Its subcellular location is the membrane. In terms of biological role, probable outward-rectifying potassium channel. This Oryza sativa subsp. japonica (Rice) protein is Potassium channel KOR2.